Here is a 1050-residue protein sequence, read N- to C-terminus: MKDAERIPGPKPLPVVGNLFDIDPEHSLESIVAFAEKFGPLFQITINGEKQIFATSQALVDELCDELRFHKAVVTGLEILRLLAHDGLFTAYHGERGWGIAHRILVPAFGPLRIRNMLDDMSDVAQQLCLKWARQGGSTSINITEDFTRLTLDTIALCTMGFRLNSFYNNETMHPFVQSMLYVLREADIQANLPGIANSIRVSAQRRMHKNIEAMRTMARGIIQERRKNKNPVDDILNTLLNGRDPVTGEGMSDDSIIDNVITFLIAGHETTSGLLSFTFYFLIQHPHILKKAQEEVDETVGLAQISAQHLAELPYIDAILKESLRLMPTAPGFTVTPKKTEVLGGRWMINAGQPVNVLLPACLRDQSVFGPDADEFRPERMLAENFSKLPPNSWKPFGNGERGCIGRAFAWQEAQLVVAMILQTFDLVPDDPSYQLRIKETLTIKPDGFRIRATLRRGQTATGLSRRSMLVARDGSSEESSNHPAEARGDHAPARGQPVSFFYGSNSGTCKALAHQLASNMMSRGYTTQKLAPLDNAVDNLPRDQPVIILTTTYDGQPTDNAKKFVAWLETGNVLSLQGISYAVFGCGHHDWTQTFYRIPILIDDLMYKAGATRLAPRGAANAAVSDLFSDLEAWEETSLLPALRENFLPSNSTDFDPLNPHQIQLSLSKPRRVDLHKGLIEAKVTAVRVLTSPDTPEKRHLEFCFQGDLSLRPGDHLNILPVNPPSTVSRVLAQFNLAPDYNITVNSFNTLGLPQATPVSASELFSSYVELCQPATRNNLKSLIAATQSDTVKQELNRLYDSYEFIVRDKRVSVLDLLEQFPSISLPIAAFISMLPALRVRTYSLSMAPAFKPSHSSLTFSVINEPAWRGSGQHLGVASNYLASLTSGSIFYFSPRPAKETFHLPKDPSRTPIIMICAGSGLAPFLSFIQDRMVLKQQNKPLAKAFLFFGCRGRSLDDLYHEELSEYEAAGVVEVRRAYSKTPEFDIAKGCRYVQHRLVTEGQAILSLWAQNAIIYVCGSTSMAKGAEAVLQNMLGPLPKERYVTEIF.

Heme is bound at residue C405. Residues 461–495 form a disordered region; sequence TATGLSRRSMLVARDGSSEESSNHPAEARGDHAPA. One can recognise a Flavodoxin-like domain in the interval 500–641; sequence VSFFYGSNSG…DLEAWEETSL (142 aa). FMN contacts are provided by residues 506–510 and 585–617; these read SNSGT and VFGC…TRLA. One can recognise an FAD-binding FR-type domain in the interval 679-907; it reads KGLIEAKVTA…RPAKETFHLP (229 aa).

This sequence in the N-terminal section; belongs to the cytochrome P450 family. It depends on FAD as a cofactor. FMN serves as cofactor. The cofactor is heme.

It carries out the reaction 2 oxidized [cytochrome P450] + NADPH = 2 reduced [cytochrome P450] + NADP(+) + H(+). It catalyses the reaction an organic molecule + reduced [NADPH--hemoprotein reductase] + O2 = an alcohol + oxidized [NADPH--hemoprotein reductase] + H2O + H(+). The enzyme catalyses dodecanoate + reduced [NADPH--hemoprotein reductase] + O2 = 5-hydroxydodecanoate + oxidized [NADPH--hemoprotein reductase] + H2O + H(+). The catalysed reaction is tetradecanoate + reduced [NADPH--hemoprotein reductase] + O2 = 7-hydroxytetradecanoate + oxidized [NADPH--hemoprotein reductase] + H2O + H(+). It carries out the reaction dodecan-1-ol + reduced [NADPH--hemoprotein reductase] + O2 = 1,5-dodecanediol + oxidized [NADPH--hemoprotein reductase] + H2O + H(+). It catalyses the reaction dodecan-1-ol + reduced [NADPH--hemoprotein reductase] + O2 = 1,4-dodecanediol + oxidized [NADPH--hemoprotein reductase] + H2O + H(+). The enzyme catalyses dodecan-1-ol + reduced [NADPH--hemoprotein reductase] + O2 = 1,6-dodecanediol + oxidized [NADPH--hemoprotein reductase] + H2O + H(+). Its function is as follows. Self-sufficient cytochrome P450 monooxygenase that catalyzes the regioselective in-chain hydroxylation of alkanes, fatty alcohols, and fatty acids at the omega-7 position. Performs hydroxylation of C10-C16 n-alkanes and C12 and C14 fatty alcohols; and thereby enables the one step biocatalytic synthesis of rare alcohols such as 5-dodecanol and 7-tetradecanol. Converts 1-dodecanol into 1,5-dodecanediol as major product with very little sub-terminally hydroxylated products with the 1,4-dodecanediol and 1,6-dodecanediol more abundant. Converts dodecanoic acid to 5-hydroxydodecanoic acid which can be further converted into delta-dodecalactone by lactonization of the 5-hydroxy acid at low pH. Also gives sub-terminal hydroxylation of dodecanoic acid with 9-hydroxydodecanoic acid being the second most abundant product. This chain is Self-sufficient cytochrome P450 monooxygenase CYP505E5, found in Aspergillus kawachii (strain NBRC 4308) (White koji mold).